Consider the following 137-residue polypeptide: MIVRNLEEARQTDRLVTAENGNWDSTRLSLAEDGGNCSFHITRIFEGTETHIHYKHHFEAVYCIEGEGEVETLADGKIWPIKPGDIYILDQHDEHLLRASKTMHLACVFTPGLTGNEVHREDGSYAPADEADDQKPL.

The segment at 118–137 (VHREDGSYAPADEADDQKPL) is disordered.

It belongs to the ectoine synthase family.

It catalyses the reaction (2S)-4-acetamido-2-aminobutanoate = L-ectoine + H2O. The protein operates within amine and polyamine biosynthesis; ectoine biosynthesis; L-ectoine from L-aspartate 4-semialdehyde: step 3/3. Seems to require potassium ions for its activity and stability. Slightly inhibited by N-ethylmaleimide. In terms of biological role, catalyzes the circularization of gamma-N-acetyl-alpha,gamma-diaminobutyric acid (ADABA) to ectoine (1,4,5,6-tetrahydro-2-methyl-4-pyrimidine carboxylic acid), which is an excellent osmoprotectant. Does not act on N-acetylated amino acids like N-alpha-acetyl-L-asparagine,N-alpha-acetyl-L-ornithine, N-alpha-acetyl-L-lysine and N-epsilon-acetyl-L-lysine. In Halomonas elongata (strain ATCC 33173 / DSM 2581 / NBRC 15536 / NCIMB 2198 / 1H9), this protein is L-ectoine synthase (ectC).